The following is a 1163-amino-acid chain: Putative beta-glucuronidase (1163 aa).

Positions 1 to 20 (MPRFLKYILGLFLISISAFG) are cleaved as a signal peptide.

This sequence belongs to the glycosyl hydrolase 2 family.

It is found in the periplasm. The enzyme catalyses a beta-D-glucuronoside + H2O = D-glucuronate + an alcohol. Glycoside hydrolase involved in ulvan degradation. Ulvan is the main polysaccharide component of the Ulvales (green seaweed) cell wall. It is composed of disaccharide building blocks comprising 3-sulfated rhamnose (Rha3S) linked to D-glucuronic acid (GlcA), L-iduronic acid (IduA), or D-xylose (Xyl). In Formosa agariphila (strain DSM 15362 / KCTC 12365 / LMG 23005 / KMM 3901 / M-2Alg 35-1), this protein is Putative beta-glucuronidase.